A 215-amino-acid polypeptide reads, in one-letter code: Cytochrome b6 (215 aa).

Residues 32-52 (IFYCLGGITLTCFLVQVATGF) traverse the membrane as a helical segment. Cys-35 contributes to the heme c binding site. Residues His-86 and His-100 each coordinate heme b. Helical transmembrane passes span 90 to 110 (ASMMVLMMILHVFRVYLTGGF), 116 to 136 (LTWVTGVVLAVLTASFGVTGY), and 186 to 206 (LHTFVLPLLTAVFMLMHFPMI). Positions 187 and 202 each coordinate heme b.

Belongs to the cytochrome b family. PetB subfamily. As to quaternary structure, the 4 large subunits of the cytochrome b6-f complex are cytochrome b6, subunit IV (17 kDa polypeptide, PetD), cytochrome f and the Rieske protein, while the 4 small subunits are PetG, PetL, PetM and PetN. The complex functions as a dimer. Requires heme b as cofactor. It depends on heme c as a cofactor.

It localises to the plastid. Its subcellular location is the chloroplast thylakoid membrane. In terms of biological role, component of the cytochrome b6-f complex, which mediates electron transfer between photosystem II (PSII) and photosystem I (PSI), cyclic electron flow around PSI, and state transitions. The protein is Cytochrome b6 of Daucus carota (Wild carrot).